A 94-amino-acid polypeptide reads, in one-letter code: CRISPR-associated endoribonuclease Cas2 1 (94 aa).

Aspartate 8 provides a ligand contact to Mg(2+).

The protein belongs to the CRISPR-associated endoribonuclease Cas2 protein family. As to quaternary structure, homodimer, forms a heterotetramer with a Cas1 homodimer. It depends on Mg(2+) as a cofactor.

Its function is as follows. CRISPR (clustered regularly interspaced short palindromic repeat), is an adaptive immune system that provides protection against mobile genetic elements (viruses, transposable elements and conjugative plasmids). CRISPR clusters contain sequences complementary to antecedent mobile elements and target invading nucleic acids. CRISPR clusters are transcribed and processed into CRISPR RNA (crRNA). Functions as a ssRNA-specific endoribonuclease. Involved in the integration of spacer DNA into the CRISPR cassette. The protein is CRISPR-associated endoribonuclease Cas2 1 of Synechocystis sp. (strain ATCC 27184 / PCC 6803 / Kazusa).